The following is a 219-amino-acid chain: Octanoyltransferase (219 aa).

The BPL/LPL catalytic domain occupies 32-207; it reads ENSQDEIWIV…TLSQELGLDK (176 aa). Substrate is bound by residues 71–78, 138–140, and 151–153; these read RGGQVTYH, SLG, and GLA. Residue Cys169 is the Acyl-thioester intermediate of the active site.

It belongs to the LipB family.

Its subcellular location is the cytoplasm. It carries out the reaction octanoyl-[ACP] + L-lysyl-[protein] = N(6)-octanoyl-L-lysyl-[protein] + holo-[ACP] + H(+). It functions in the pathway protein modification; protein lipoylation via endogenous pathway; protein N(6)-(lipoyl)lysine from octanoyl-[acyl-carrier-protein]: step 1/2. Functionally, catalyzes the transfer of endogenously produced octanoic acid from octanoyl-acyl-carrier-protein onto the lipoyl domains of lipoate-dependent enzymes. Lipoyl-ACP can also act as a substrate although octanoyl-ACP is likely to be the physiological substrate. This is Octanoyltransferase from Shewanella pealeana (strain ATCC 700345 / ANG-SQ1).